A 729-amino-acid polypeptide reads, in one-letter code: Denticleless protein homolog (729 aa).

Met-1 bears the N-acetylmethionine mark. WD repeat units follow at residues 47 to 89 (GVPV…SKKT), 96 to 135 (AHWN…LMGT), and 138 to 178 (GHQC…KDGF). The DDB1-binding motif signature appears at 168 to 171 (WDTR). Positions 189–198 (HNTADKQTPS) are enriched in polar residues. Positions 189–212 (HNTADKQTPSKPKKKQNSKGLAPA) are disordered. A Phosphothreonine modification is found at Thr-196. The short motif at 197–203 (PSKPKKK) is the Nuclear localization signal element. WD repeat units follow at residues 214-253 (DSQQ…TAYR), 269-308 (TRKL…TSPV), 313-354 (GHQN…HPPT), and 358-398 (GHSQ…EEKP). Positions 243–246 (WDLR) match the DDB1-binding motif motif. Ser-409 and Ser-425 each carry phosphoserine. Disordered stretches follow at residues 416–445 (KACP…SSPS) and 460–491 (PSST…VSPK). A compositionally biased stretch (low complexity) spans 427-445 (STPAKAPRAKSSPSISSPS). The span at 460–475 (PSSTPTFSVKTTPATT) shows a compositional bias: polar residues. Phosphothreonine; by CDK1 and CDK2 is present on Thr-463. The segment covering 476–491 (RSSVSRRGSISSVSPK) has biased composition (low complexity). Residues Ser-484, Ser-489, Ser-494, and Ser-511 each carry the phosphoserine modification. The interval 504 to 546 (VTRTPSSSPPVTPPASETKISSPRKALIPVSQKSSQADACSES) is disordered. Phosphothreonine is present on Thr-515. The residue at position 556 (Ser-556) is a Phosphoserine. Residues 596–607 (VLSQDSEGPTKS) show a composition bias toward polar residues. Positions 596–705 (VLSQDSEGPT…GPVTITPSSM (110 aa)) are disordered. Low complexity-rich tracts occupy residues 630-645 (EGCG…CGEG) and 674-688 (SSPR…SSRR). Ser-675 and Ser-678 each carry phosphoserine. 2 positions are modified to phosphothreonine: Thr-683 and Thr-701.

Belongs to the WD repeat cdt2 family. Component of the DCX(DTL) E3 ubiquitin ligase complex (also called CRL4(CDT2)), at least composed of CUL4 (CUL4A or CUL4B), DDB1, DTL/CDT2 and RBX1. Interacts with CDKN1A and DDB1. Interacts with FBXO11; SCF(FBXWO11) controls DTL stability but DCX(DTL) does not control FBXO11 stability. Interacts with CRY1. Post-translationally, ubiquitinated by the anaphase promoting complex/cyclosome (APC/C). Autoubiquitinated through 'Lys-48'-polyubiquitin chains in a PCNA-independent reaction, allowing proteasomal turnover. Polyubiquitinated by SCF(FBXO11) when not phosphorylated, leading to its degradation. A tight regulation of the polyubiquitination by SCF(FBXO11) is involved in the control of different processes such as TGF-beta signaling, cell cycle progression and exit. Phosphorylated at Thr-463 by CDK1/Cyclin B and CDK2/Cycnlin A but not by CDK2/Cyclin E, MAPK1 or PLK1. Phosphorylation at Thr-463 inhibits the interaction with FBXO11 and decreases upon cell cycle exit induced by TGF-beta or serum starvation.

It is found in the nucleus. It localises to the nucleus membrane. Its subcellular location is the cytoplasm. The protein resides in the cytoskeleton. The protein localises to the microtubule organizing center. It is found in the centrosome. It localises to the chromosome. Its pathway is protein modification; protein ubiquitination. Its function is as follows. Substrate-specific adapter of a DCX (DDB1-CUL4-X-box) E3 ubiquitin-protein ligase complex required for cell cycle control, DNA damage response and translesion DNA synthesis. The DCX(DTL) complex, also named CRL4(CDT2) complex, mediates the polyubiquitination and subsequent degradation of CDT1, CDKN1A/p21(CIP1), FBH1, KMT5A and SDE2. CDT1 degradation in response to DNA damage is necessary to ensure proper cell cycle regulation of DNA replication. CDKN1A/p21(CIP1) degradation during S phase or following UV irradiation is essential to control replication licensing. KMT5A degradation is also important for a proper regulation of mechanisms such as TGF-beta signaling, cell cycle progression, DNA repair and cell migration. Most substrates require their interaction with PCNA for their polyubiquitination: substrates interact with PCNA via their PIP-box, and those containing the 'K+4' motif in the PIP box, recruit the DCX(DTL) complex, leading to their degradation. In undamaged proliferating cells, the DCX(DTL) complex also promotes the 'Lys-164' monoubiquitination of PCNA, thereby being involved in PCNA-dependent translesion DNA synthesis. The DDB1-CUL4A-DTL E3 ligase complex regulates the circadian clock function by mediating the ubiquitination and degradation of CRY1. The polypeptide is Denticleless protein homolog (Dtl) (Mus musculus (Mouse)).